The chain runs to 71 residues: uncharacterized protein (71 aa).

This is an uncharacterized protein from Saccharomyces cerevisiae (strain ATCC 204508 / S288c) (Baker's yeast).